Consider the following 495-residue polypeptide: Probable aspartic-type endopeptidase OPSB (495 aa).

Residues 1–19 form the signal peptide; sequence MRGDSFIWSLATAIPLLST. Positions 73–408 constitute a Peptidase A1 domain; it reads YFCNLTLGTP…DLDNNEISIA (336 aa). N-linked (GlcNAc...) asparagine glycosylation occurs at Asn76. Asp91 is a catalytic residue. Asn136 is a glycosylation site (N-linked (GlcNAc...) asparagine). Asp290 is an active-site residue. An N-linked (GlcNAc...) asparagine glycan is attached at Asn413. Residues 448–470 form a disordered region; it reads TGLPGVETGVPGSRPPSSKAAGQ. The GPI-anchor amidated alanine moiety is linked to residue Ala467. The propeptide at 468 to 495 is removed in mature form; that stretch reads AGQAKRPDFVLGVAAVGLAGAGMLFAAM.

It belongs to the peptidase A1 family.

The protein resides in the cell membrane. Functionally, probable GPI-anchored aspartic-type endopeptidase which contributes to virulence. This chain is Probable aspartic-type endopeptidase OPSB (OPSB), found in Trichophyton verrucosum (strain HKI 0517).